The chain runs to 296 residues: Splicing factor U2af small subunit A (296 aa).

Residues 12-40 (EKDRVNCPFYFKIGACRHGDRCSRLHNRP) form a C3H1-type 1 zinc finger. Residues 44–146 (PTLLLSNMYQ…RPIIADFSPV (103 aa)) form the RRM domain. A C3H1-type 2 zinc finger spans residues 148–175 (DFREATCRQYEENNCNRGGYCNFMHVKL). The segment covering 191 to 202 (SYRRGSRSRSRS) has biased composition (basic residues). A disordered region spans residues 191-296 (SYRRGSRSRS…EREEKEEGGA (106 aa)). Composition is skewed to basic and acidic residues over residues 209-254 (NKRD…DGSR) and 272-296 (EGSEERRARIEQWNREREEKEEGGA).

This sequence belongs to the splicing factor SR family. As to quaternary structure, component of the spliceosome. Homo- and heterodimer. Interacts with U2AF35B, RNU1 and SR45.

Its subcellular location is the nucleus speckle. Functionally, necessary for the splicing of pre-mRNA. Probably active at the 3' splice sites. The protein is Splicing factor U2af small subunit A of Arabidopsis thaliana (Mouse-ear cress).